Consider the following 282-residue polypeptide: RsbT co-antagonist protein RsbRC (282 aa).

Phosphoserine occurs at positions 165 and 174. Residues 165-276 (SAPVIVLFHS…STLASAIASD (112 aa)) enclose the STAS domain. At Thr-186 the chain carries Phosphothreonine.

Probably present in the stressosome with RsbRA, RsbRB, RsbRD and RsbS. Phosphorylated by RsbT.

In terms of biological role, one of 4 functionally non-identical RsbR paralogs, it functions in the environmental signaling branch of the general stress response. Negative regulator of sigma-B activity. Non-phosphorylated RsbS binds to RsbT, preventing its association with RsbU. Requires any one of RsbRA, RsbRB, RsbRC or RsbRD to sequester RsbT. When RsbS and the RsbR paralog(s) are phosphorylated, they release RsbT, which can then bind and activate RsbU. This is RsbT co-antagonist protein RsbRC (rsbRC) from Bacillus subtilis (strain 168).